An 852-amino-acid polypeptide reads, in one-letter code: Vacuolar protein sorting-associated protein 16 homolog (852 aa).

It belongs to the VPS16 family. Probable core component of at least two putative endosomal tethering complexes, the homotypic fusion and vacuole protein sorting (HOPS) complex and the class C core vacuole/endosome tethering (CORVET) complex. Their common core is composed of the class C Vps proteins vps-11, vps-16 and vps-18, which in HOPS further associates with vps-33.1, vps-39 and vps-41 and in CORVET with vps-8 and vps-33.2.

It localises to the late endosome membrane. Its subcellular location is the lysosome membrane. In terms of biological role, plays a role in vesicle-mediated protein trafficking to lysosomal compartments including the endocytic membrane transport pathways. Believed to act as a core component of the putative HOPS and CORVET endosomal tethering complexes which are proposed to be involved in the rab-5-to-rab-7 endosome conversion probably implicating sand-1, and via binding SNAREs and SNARE complexes to mediate tethering and docking events during SNARE-mediated membrane fusion. The HOPS complex is proposed to be recruited to rab-7 on the late endosomal membrane and to regulate late endocytic, phagocytic and autophagic traffic towards lysosomes. Within the HOPS complex, contributes to the normal development of gut granules in the adult intestine. The CORVET complex is proposed to function as a rab-5 effector to mediate early endosome fusion probably in specific endosome subpopulations. Required for recruitment of vps-33.1 to the HOPS complex. Required for fusion of endosomes and autophagosomes with lysosomes; the function is dependent on its association with vps-33.1 but not vps-33.2. This Caenorhabditis elegans protein is Vacuolar protein sorting-associated protein 16 homolog.